A 370-amino-acid polypeptide reads, in one-letter code: Cytochrome b (370 aa).

The next 4 helical transmembrane spans lie at 25-45 (FGSMLLTCMALQTSTGFFLAI), 69-90 (WIMQNLHAIGASLFFICIYTHI), 105-125 (WLSGTILLIILMATAFFGYVL), and 170-190 (FFALHFILPFLIISLSSIHIV). 2 residues coordinate heme b: His-75 and His-89. Residues His-174 and His-188 each coordinate heme b. Residue His-193 participates in a ubiquinone binding. 4 helical membrane passes run 218–238 (YKDMLMATTMITMLFITMSFM), 280–300 (LGGTLALLMSVIILTAPPFTH), 312–332 (LTQILFWMLIATFITITWTAT), and 339–358 (FITISQMASTXYFLFFIINP).

It belongs to the cytochrome b family. As to quaternary structure, the cytochrome bc1 complex contains 3 respiratory subunits (MT-CYB, CYC1 and UQCRFS1), 2 core proteins (UQCRC1 and UQCRC2) and probably 6 low-molecular weight proteins. Heme b serves as cofactor.

It localises to the mitochondrion inner membrane. Component of the ubiquinol-cytochrome c reductase complex (complex III or cytochrome b-c1 complex) that is part of the mitochondrial respiratory chain. The b-c1 complex mediates electron transfer from ubiquinol to cytochrome c. Contributes to the generation of a proton gradient across the mitochondrial membrane that is then used for ATP synthesis. This chain is Cytochrome b (MT-CYB), found in Micropechis ikaheca (New Guinean small-eyed snake).